We begin with the raw amino-acid sequence, 442 residues long: 3-ketoacyl-CoA thiolase (442 aa).

C105 serves as the catalytic Acyl-thioester intermediate. Active-site proton acceptor residues include H398 and C428.

Belongs to the thiolase-like superfamily. Thiolase family. As to quaternary structure, heterotetramer of two alpha chains (FadJ) and two beta chains (FadI).

The protein localises to the cytoplasm. It catalyses the reaction an acyl-CoA + acetyl-CoA = a 3-oxoacyl-CoA + CoA. The protein operates within lipid metabolism; fatty acid beta-oxidation. Its function is as follows. Catalyzes the final step of fatty acid oxidation in which acetyl-CoA is released and the CoA ester of a fatty acid two carbons shorter is formed. This Aliivibrio fischeri (strain MJ11) (Vibrio fischeri) protein is 3-ketoacyl-CoA thiolase.